Here is a 428-residue protein sequence, read N- to C-terminus: Enolase (428 aa).

Residue glutamine 163 coordinates (2R)-2-phosphoglycerate. Glutamate 205 serves as the catalytic Proton donor. Residues aspartate 242, glutamate 285, and aspartate 312 each contribute to the Mg(2+) site. Lysine 337, arginine 366, serine 367, and lysine 388 together coordinate (2R)-2-phosphoglycerate. The active-site Proton acceptor is the lysine 337.

This sequence belongs to the enolase family. The cofactor is Mg(2+).

It is found in the cytoplasm. The protein localises to the secreted. Its subcellular location is the cell surface. The catalysed reaction is (2R)-2-phosphoglycerate = phosphoenolpyruvate + H2O. It functions in the pathway carbohydrate degradation; glycolysis; pyruvate from D-glyceraldehyde 3-phosphate: step 4/5. Functionally, catalyzes the reversible conversion of 2-phosphoglycerate (2-PG) into phosphoenolpyruvate (PEP). It is essential for the degradation of carbohydrates via glycolysis. The chain is Enolase from Brevibacillus brevis (strain 47 / JCM 6285 / NBRC 100599).